The sequence spans 572 residues: Na(+)/citrate cotransporter (572 aa).

8 helical membrane-spanning segments follow: residues 13–33 (SFAI…LIPD), 53–73 (VIPV…LKVL), 80–100 (IQYM…AVAV), 124–144 (LMLG…NTAA), 218–238 (SASI…VLLG), 255–275 (SWFG…WLWL), 315–335 (SLSY…ILWF), and 357–377 (HITD…IPSQ). A glycan (N-linked (GlcNAc...) asparagine) is linked at N382. The next 4 membrane-spanning stretches (helical) occupy residues 410 to 430 (VPWD…GCET), 443 to 463 (PLRL…VAMT), 491 to 511 (PLYV…LPVA), and 532 to 552 (TGLI…NTWG). N566 carries N-linked (GlcNAc...) asparagine glycosylation.

It belongs to the SLC13A/DASS transporter (TC 2.A.47) family. NADC subfamily. Homodimer.

Its subcellular location is the cell membrane. The enzyme catalyses citrate(out) + 4 Na(+)(out) = citrate(in) + 4 Na(+)(in). Its activity is regulated as follows. Inhibited by Li(+). Its function is as follows. High-affinity sodium/citrate cotransporter that mediates citrate entry into cells, which is a critical participant of biochemical pathways. May function in various metabolic processes in which citrate has a critical role such as energy production (Krebs cycle), fatty acid synthesis, cholesterol synthesis, glycolysis, and gluconeogenesis. Transports citrate into the cell in a Na(+)-dependent manner, recognizing the trivalent form of citrate (physiological pH) rather than the divalent form. Can recognizes succinate as a substrate, but its affinity for succinate is several fold lower than for citrate. The stoichiometry is probably 4 Na(+) for each carboxylate, irrespective of whether the translocated substrate is divalent or trivalent, rendering the process electrogenic. Involved in the regulation of citrate levels in the brain. The polypeptide is Na(+)/citrate cotransporter (Slc13a5) (Mus musculus (Mouse)).